The primary structure comprises 67 residues: Photosystem II reaction center protein H (67 aa).

Residues 27–47 (GAVPVMAFVGVLLLVFLVILL) form a helical membrane-spanning segment.

This sequence belongs to the PsbH family. In terms of assembly, PSII is composed of 1 copy each of membrane proteins PsbA, PsbB, PsbC, PsbD, PsbE, PsbF, PsbH, PsbI, PsbJ, PsbK, PsbL, PsbM, PsbT, PsbX, PsbY, Psb30/Ycf12, peripheral proteins PsbO, CyanoQ (PsbQ), PsbU, PsbV and a large number of cofactors. It forms dimeric complexes.

It localises to the cellular thylakoid membrane. In terms of biological role, one of the components of the core complex of photosystem II (PSII), required for its stability and/or assembly. PSII is a light-driven water:plastoquinone oxidoreductase that uses light energy to abstract electrons from H(2)O, generating O(2) and a proton gradient subsequently used for ATP formation. It consists of a core antenna complex that captures photons, and an electron transfer chain that converts photonic excitation into a charge separation. This chain is Photosystem II reaction center protein H, found in Prochlorococcus marinus (strain SARG / CCMP1375 / SS120).